Reading from the N-terminus, the 97-residue chain is YcgL domain-containing protein PP_4590 (97 aa).

The 85-residue stretch at 3 to 87 (RICSIYKSPR…LEDEYIEHLP (85 aa)) folds into the YcgL domain.

This chain is YcgL domain-containing protein PP_4590, found in Pseudomonas putida (strain ATCC 47054 / DSM 6125 / CFBP 8728 / NCIMB 11950 / KT2440).